Consider the following 893-residue polypeptide: Beta-adaptin-like protein C (893 aa).

A disordered region spans residues 593-621 (TEDEDYVEGSETGYPEASGNPVDGAASPS).

Belongs to the adaptor complexes large subunit family. As to quaternary structure, adaptor protein complexes are heterotetramers composed of two large adaptins (beta-type subunit and alpha-type or delta-type or epsilon-type or gamma-type subunit), a medium adaptin (mu-type subunit) and a small adaptin (sigma-type subunit).

Its subcellular location is the golgi apparatus. It is found in the trans-Golgi network. It localises to the cytoplasmic vesicle. The protein localises to the clathrin-coated vesicle membrane. Its function is as follows. Subunit of clathrin-associated adaptor protein complex that plays a role in protein sorting in the late-Golgi/trans-Golgi network (TGN) and/or endosomes. The AP complexes mediate both the recruitment of clathrin to membranes and the recognition of sorting signals within the cytosolic tails of transmembrane cargo molecules. In Arabidopsis thaliana (Mouse-ear cress), this protein is Beta-adaptin-like protein C (BETAC-AD).